Reading from the N-terminus, the 129-residue chain is Cytochrome c oxidase subunit 5B, mitochondrial (129 aa).

The transit peptide at 1-31 (MASRLLRGVGALAAQALRAHGPRGVAATRSM) directs the protein to the mitochondrion. N6-acetyllysine is present on residues lysine 68 and lysine 86. The Zn(2+) site is built by cysteine 91, cysteine 93, cysteine 113, and cysteine 116. N6-acetyllysine is present on lysine 121.

This sequence belongs to the cytochrome c oxidase subunit 5B family. In terms of assembly, component of the cytochrome c oxidase (complex IV, CIV), a multisubunit enzyme composed of 14 subunits. The complex is composed of a catalytic core of 3 subunits MT-CO1, MT-CO2 and MT-CO3, encoded in the mitochondrial DNA, and 11 supernumerary subunits COX4I, COX5A, COX5B, COX6A, COX6B, COX6C, COX7A, COX7B, COX7C, COX8 and NDUFA4, which are encoded in the nuclear genome. The complex exists as a monomer or a dimer and forms supercomplexes (SCs) in the inner mitochondrial membrane with NADH-ubiquinone oxidoreductase (complex I, CI) and ubiquinol-cytochrome c oxidoreductase (cytochrome b-c1 complex, complex III, CIII), resulting in different assemblies (supercomplex SCI(1)III(2)IV(1) and megacomplex MCI(2)III(2)IV(2)).

It is found in the mitochondrion inner membrane. It functions in the pathway energy metabolism; oxidative phosphorylation. Its function is as follows. Component of the cytochrome c oxidase, the last enzyme in the mitochondrial electron transport chain which drives oxidative phosphorylation. The respiratory chain contains 3 multisubunit complexes succinate dehydrogenase (complex II, CII), ubiquinol-cytochrome c oxidoreductase (cytochrome b-c1 complex, complex III, CIII) and cytochrome c oxidase (complex IV, CIV), that cooperate to transfer electrons derived from NADH and succinate to molecular oxygen, creating an electrochemical gradient over the inner membrane that drives transmembrane transport and the ATP synthase. Cytochrome c oxidase is the component of the respiratory chain that catalyzes the reduction of oxygen to water. Electrons originating from reduced cytochrome c in the intermembrane space (IMS) are transferred via the dinuclear copper A center (CU(A)) of subunit 2 and heme A of subunit 1 to the active site in subunit 1, a binuclear center (BNC) formed by heme A3 and copper B (CU(B)). The BNC reduces molecular oxygen to 2 water molecules using 4 electrons from cytochrome c in the IMS and 4 protons from the mitochondrial matrix. This Rattus norvegicus (Rat) protein is Cytochrome c oxidase subunit 5B, mitochondrial (Cox5b).